Here is a 437-residue protein sequence, read N- to C-terminus: MTCRGSPLAPLLLFSLHGVAASLEVSESPGSVQVARGQTAVLPCTFTTSAALINLNVIWMVIPLSNANQPEQVILYQGGQMFDGAPRFHGRVGFTGTMPATNVSIFINNTQLSDTGTYQCLVNNLPDRGGRNIGVTGLTVLVPPSAPHCQIQGSQDIGSDVILLCSSEEGIPRPTYLWEKLDNTLKLPPTATQDQVQGTVTIRNISALSSGLYQCVASNAIGTSTCLLDLQVISPQPRSIGLIAGAIGTGAVIIIFCIALILGAFFYWRSKNKEEEEEEIPNEIREDDLPPKCSSSAKAFHMEISSSENNTLTSSNTYNSRYWSSNPKAHRNTESFGHFGDLRQSFSLHSGNASVPAIYANGSHLAPAPHKTLVVTANRGSSLPAVSRSNGSVSRKARPPPVPSLHTHSYTVSQATLERIGAVPVMVPAQSRAGSLV.

A signal peptide spans 1–22 (MTCRGSPLAPLLLFSLHGVAAS). Positions 23 to 136 (LEVSESPGSV…DRGGRNIGVT (114 aa)) constitute an Ig-like V-type domain. At 23–241 (LEVSESPGSV…VISPQPRSIG (219 aa)) the chain is on the extracellular side. 2 cysteine pairs are disulfide-bonded: Cys44–Cys120 and Cys165–Cys215. A glycan (N-linked (GlcNAc...) asparagine) is linked at Asn102. The region spanning 144–234 (PSAPHCQIQG…TCLLDLQVIS (91 aa)) is the Ig-like C2-type domain. A helical membrane pass occupies residues 242 to 262 (LIAGAIGTGAVIIIFCIALIL). At 263–437 (GAFFYWRSKN…PAQSRAGSLV (175 aa)) the chain is on the cytoplasmic side. Arg379 carries the omega-N-methylarginine modification. A disordered region spans residues 382 to 405 (SLPAVSRSNGSVSRKARPPPVPSL).

In terms of processing, N-glycosylated.

It is found in the cell membrane. Its function is as follows. Functions as a cell adhesion molecule through homophilic interaction. Stimulates cell growth. The protein is Immunoglobulin superfamily member 11 (IGSF11) of Bos taurus (Bovine).